Here is a 567-residue protein sequence, read N- to C-terminus: Proline--tRNA ligase (567 aa).

The protein belongs to the class-II aminoacyl-tRNA synthetase family. ProS type 1 subfamily. Homodimer.

The protein resides in the cytoplasm. The enzyme catalyses tRNA(Pro) + L-proline + ATP = L-prolyl-tRNA(Pro) + AMP + diphosphate. Functionally, catalyzes the attachment of proline to tRNA(Pro) in a two-step reaction: proline is first activated by ATP to form Pro-AMP and then transferred to the acceptor end of tRNA(Pro). As ProRS can inadvertently accommodate and process non-cognate amino acids such as alanine and cysteine, to avoid such errors it has two additional distinct editing activities against alanine. One activity is designated as 'pretransfer' editing and involves the tRNA(Pro)-independent hydrolysis of activated Ala-AMP. The other activity is designated 'posttransfer' editing and involves deacylation of mischarged Ala-tRNA(Pro). The misacylated Cys-tRNA(Pro) is not edited by ProRS. This chain is Proline--tRNA ligase, found in Idiomarina loihiensis (strain ATCC BAA-735 / DSM 15497 / L2-TR).